A 179-amino-acid polypeptide reads, in one-letter code: Chymotrypsin inhibitor ECI (179 aa).

The residue at position 1 (Q1) is a Pyrrolidone carboxylic acid. Intrachain disulfides connect C40–C84 and C134–C143.

This sequence belongs to the protease inhibitor I3 (leguminous Kunitz-type inhibitor) family.

Inhibition of chymotrypsin. This is Chymotrypsin inhibitor ECI from Erythrina variegata (Indian coral tree).